The primary structure comprises 333 residues: Foldase protein PrsA (333 aa).

Positions 1–22 (MKKSTKLLAGIVTLASAMTLAA) are cleaved as a signal peptide. Cys-23 carries N-palmitoyl cysteine lipidation. Residue Cys-23 is the site of S-diacylglycerol cysteine attachment. Positions 145–240 (TPEMTTQVTT…NKFYIVKVTK (96 aa)) constitute a PpiC domain. Positions 301–333 (DKKASKANTSKSDQKSSSDSSKDSQSSKSKSEK) are disordered. A compositionally biased stretch (basic and acidic residues) spans 312–322 (SDQKSSSDSSK). Residues 323–333 (DSQSSKSKSEK) show a composition bias toward low complexity.

Belongs to the PrsA family.

Its subcellular location is the cell membrane. It catalyses the reaction [protein]-peptidylproline (omega=180) = [protein]-peptidylproline (omega=0). Its function is as follows. Plays a major role in protein secretion by helping the post-translocational extracellular folding of several secreted proteins. This chain is Foldase protein PrsA, found in Streptococcus equi subsp. equi (strain 4047).